Consider the following 3856-residue polypeptide: Hybrid PKS-NRPS synthetase traA (3856 aa).

One can recognise a Ketosynthase family 3 (KS3) domain in the interval 6 to 438; the sequence is PEPIAIVGSG…GTNGHAILEE (433 aa). Catalysis depends on for beta-ketoacyl synthase activity residues C179, H318, and H358. The segment at 554-885 is malonyl-CoA:ACP transacylase (MAT) domain; it reads IFTGQGAQWA…FSDALGFVWT (332 aa). Residues 943 to 1081 are N-terminal hotdog fold; sequence HELLGVPSPN…GKVTVIYGTP (139 aa). The tract at residues 943 to 1247 is dehydratase (DH) domain; sequence HELLGVPSPN…LSMKPFSPAT (305 aa). The PKS/mFAS DH domain occupies 943 to 1249; that stretch reads HELLGVPSPN…MKPFSPATAD (307 aa). The active-site Proton acceptor; for dehydratase activity is the H975. The interval 1096 to 1249 is C-terminal hotdog fold; the sequence is MVDIQAEQFY…MKPFSPATAD (154 aa). The active-site Proton donor; for dehydratase activity is D1156. The tract at residues 1290-1456 is methyltransferase (MT) domain; the sequence is LACVAQQIVH…RKAGFSGIDS (167 aa). Residues 1984-2158 are ketoreductase (KR) domain; that stretch reads TYVLVGLSGR…ATSLDIGSIV (175 aa). The 82-residue stretch at 2266–2347 folds into the Carrier 1 domain; it reads ADALEILKEL…TLCQQALEKL (82 aa). At S2307 the chain carries O-(pantetheine 4'-phosphoryl)serine. Residues 2351–2422 form a disordered region; that stretch reads ILPNVESGGP…SSTPATVLSN (72 aa). 2 stretches are compositionally biased toward low complexity: residues 2357–2369 and 2399–2418; these read SGGPSKTGSSKPT and TTSPQSTLSSDQSPSSTPAT. Positions 2446–2884 are condensation (C) domain; sequence VKTELVSFQQ…FALFSDKELK (439 aa). The tract at residues 2910-3310 is adenylation (A) domain; it reads QIAKENDDKV…GAMVFHNRIA (401 aa). The tract at residues 3403 to 3429 is disordered; it reads SKTDRKALKELPLPQRSNHDTGDNTES. The 80-residue stretch at 3428–3507 folds into the Carrier 2 domain; sequence ESLTETMLEL…DMTQKIEESL (80 aa). The residue at position 3467 (S3467) is an O-(pantetheine 4'-phosphoryl)serine. Residues 3544-3768 are reductase (R) domain; it reads VTGSGGFLGK…EMTPIHSAAS (225 aa).

It in the C-terminal section; belongs to the NRP synthetase family.

Its pathway is secondary metabolite biosynthesis. Hybrid PKS-NRPS synthetase; part of the tra gene cluster that produces terrestric acid. The clavatol biosynthesis cluster cla and the terrestric acid cluster tra are both involved in the production of peniphenones and penilactones. The non-reducing PKS claF is responsible for the formation of clavatol from successive condensations of 3 malonyl-CoA units, presumably with a simple acetyl-CoA starter unit, and 2 methylation steps. The esterase claE probably collaborates with claF by catalyzing the hydrolysis of ACP-bound acyl intermediates to free the ACP from stalled intermediates. The clavatol oxidase claD then converts clavatol to hydroxyclavatol. Spontaneous dehydration of hydroxyclavatol leads to the accumulation of the highly active ortho-quinone methide. On the other hand, the PKS-NRPS hybrid traA is involved in the formation of crustosic acid, with the help of traB and traD. The polyketide synthase module (PKS) of traA is responsible for the synthesis of the polyketide backbone via the condensation of an acetyl-CoA starter unit with 3 malonyl-CoA units. The downstream nonribosomal peptide synthetase (NRPS) module then amidates the carboxyl end of the polyketide with L-malic acid. Because traA lacks a designated enoylreductase (ER) domain, the required activity is provided the enoyl reductase traG. Crustosic acid undergoes decarboxylation and isomerization to the terrestric acid, catalyzed by the 2-oxoglutarate-dependent dioxygenase traH. Both acids are further converted to the 2 gamma-butyrolactones (R)-5-methyltetronic acid and (S)-5-carboxylmethyltetronic acid, with involvement of the cytochrome P450 monooxygenase claJ. Spontaneous addition of the methide to these gamma-butyrolactones leads to peniphenone D and penilactone D, which undergo again stereospecific attacking by methide to give penilactones A and B. This is Hybrid PKS-NRPS synthetase traA from Penicillium crustosum (Blue mold fungus).